Here is a 367-residue protein sequence, read N- to C-terminus: Adenine deaminase (367 aa).

The Zn(2+) site is built by histidine 19, histidine 21, and histidine 209. The active-site Proton donor is glutamate 212. Aspartate 290 contributes to the Zn(2+) binding site. Position 291 (aspartate 291) interacts with substrate.

This sequence belongs to the metallo-dependent hydrolases superfamily. Adenosine and AMP deaminases family. Adenine deaminase type 2 subfamily. Zn(2+) serves as cofactor.

It is found in the cytoplasm. It localises to the nucleus. The enzyme catalyses adenine + H2O + H(+) = hypoxanthine + NH4(+). Functionally, catalyzes the hydrolytic deamination of adenine to hypoxanthine. Plays an important role in the purine salvage pathway and in nitrogen catabolism. Also exhibits a low activity towards N(6)-substituted adenines that are commonly known as the plant hormones cytokinins. In Schizosaccharomyces pombe (strain 972 / ATCC 24843) (Fission yeast), this protein is Adenine deaminase.